The sequence spans 104 residues: N(2)-fixation sustaining protein CowN (104 aa).

Belongs to the CowN family.

Is required to sustain N(2)-dependent growth in the presence of low levels of carbon monoxide (CO). Probably acts by protecting the N(2) fixation ability of the nitrogenase complex, which is inactivated in the presence of CO. In Arcobacter nitrofigilis (strain ATCC 33309 / DSM 7299 / CCUG 15893 / LMG 7604 / NCTC 12251 / CI) (Campylobacter nitrofigilis), this protein is N(2)-fixation sustaining protein CowN.